The sequence spans 482 residues: GTPase Obg (482 aa).

In terms of domain architecture, Obg spans P2–V159. One can recognise an OBG-type G domain in the interval A160–V340. Residues G166–S173, F191–V195, D212–G215, N292–D295, and S321–L323 each bind GTP. The Mg(2+) site is built by S173 and T193. Residues P358 to P438 form the OCT domain. Residues P441 to E482 are disordered. Positions T453 to R469 are enriched in basic and acidic residues.

Belongs to the TRAFAC class OBG-HflX-like GTPase superfamily. OBG GTPase family. In terms of assembly, monomer. Mg(2+) serves as cofactor.

The protein resides in the cytoplasm. In terms of biological role, an essential GTPase which binds GTP, GDP and possibly (p)ppGpp with moderate affinity, with high nucleotide exchange rates and a fairly low GTP hydrolysis rate. Plays a role in control of the cell cycle, stress response, ribosome biogenesis and in those bacteria that undergo differentiation, in morphogenesis control. This Mycobacteroides abscessus (strain ATCC 19977 / DSM 44196 / CCUG 20993 / CIP 104536 / JCM 13569 / NCTC 13031 / TMC 1543 / L948) (Mycobacterium abscessus) protein is GTPase Obg.